Here is a 130-residue protein sequence, read N- to C-terminus: Small ribosomal subunit protein uS8 (130 aa).

This sequence belongs to the universal ribosomal protein uS8 family. In terms of assembly, part of the 30S ribosomal subunit. Contacts proteins S5 and S12.

Functionally, one of the primary rRNA binding proteins, it binds directly to 16S rRNA central domain where it helps coordinate assembly of the platform of the 30S subunit. This is Small ribosomal subunit protein uS8 from Moorella thermoacetica (strain ATCC 39073 / JCM 9320).